Here is a 29-residue protein sequence, read N- to C-terminus: Cytochrome b6-f complex subunit 8 (29 aa).

A helical membrane pass occupies residues 3–23 (IVSLAWASLMVVFTFSLSLVV).

The protein belongs to the PetN family. The 4 large subunits of the cytochrome b6-f complex are cytochrome b6, subunit IV (17 kDa polypeptide, PetD), cytochrome f and the Rieske protein, while the 4 small subunits are PetG, PetL, PetM and PetN. The complex functions as a dimer.

It is found in the plastid. Its subcellular location is the chloroplast thylakoid membrane. Component of the cytochrome b6-f complex, which mediates electron transfer between photosystem II (PSII) and photosystem I (PSI), cyclic electron flow around PSI, and state transitions. The sequence is that of Cytochrome b6-f complex subunit 8 from Coffea arabica (Arabian coffee).